The chain runs to 565 residues: Arginine--tRNA ligase (565 aa).

The 'HIGH' region signature appears at Pro-121–His-131.

The protein belongs to the class-I aminoacyl-tRNA synthetase family. In terms of assembly, monomer.

Its subcellular location is the cytoplasm. It catalyses the reaction tRNA(Arg) + L-arginine + ATP = L-arginyl-tRNA(Arg) + AMP + diphosphate. The chain is Arginine--tRNA ligase from Lactobacillus delbrueckii subsp. bulgaricus (strain ATCC BAA-365 / Lb-18).